Here is a 179-residue protein sequence, read N- to C-terminus: ATP synthase subunit delta (179 aa).

The protein belongs to the ATPase delta chain family. In terms of assembly, F-type ATPases have 2 components, F(1) - the catalytic core - and F(0) - the membrane proton channel. F(1) has five subunits: alpha(3), beta(3), gamma(1), delta(1), epsilon(1). F(0) has three main subunits: a(1), b(2) and c(10-14). The alpha and beta chains form an alternating ring which encloses part of the gamma chain. F(1) is attached to F(0) by a central stalk formed by the gamma and epsilon chains, while a peripheral stalk is formed by the delta and b chains.

The protein resides in the cell inner membrane. In terms of biological role, f(1)F(0) ATP synthase produces ATP from ADP in the presence of a proton or sodium gradient. F-type ATPases consist of two structural domains, F(1) containing the extramembraneous catalytic core and F(0) containing the membrane proton channel, linked together by a central stalk and a peripheral stalk. During catalysis, ATP synthesis in the catalytic domain of F(1) is coupled via a rotary mechanism of the central stalk subunits to proton translocation. This protein is part of the stalk that links CF(0) to CF(1). It either transmits conformational changes from CF(0) to CF(1) or is implicated in proton conduction. This Koribacter versatilis (strain Ellin345) protein is ATP synthase subunit delta.